The primary structure comprises 177 residues: Ribonuclease H (177 aa).

An RNase H type-1 domain is found at Met1–Ala142. Positions 10, 48, 70, and 134 each coordinate Mg(2+). Residues Gly126–Arg138 are compositionally biased toward basic and acidic residues. A disordered region spans residues Gly126–Tyr177.

The protein belongs to the RNase H family. As to quaternary structure, monomer. Mg(2+) is required as a cofactor.

The protein localises to the cytoplasm. It carries out the reaction Endonucleolytic cleavage to 5'-phosphomonoester.. In terms of biological role, endonuclease that specifically degrades the RNA of RNA-DNA hybrids. This chain is Ribonuclease H, found in Mesorhizobium japonicum (strain LMG 29417 / CECT 9101 / MAFF 303099) (Mesorhizobium loti (strain MAFF 303099)).